Reading from the N-terminus, the 217-residue chain is Secreted RxLR effector protein 147 (217 aa).

A signal peptide spans methionine 1–alanine 23. The tract at residues glutamate 22–histidine 52 is disordered. Residues arginine 46–arginine 67 carry the RxLR-dEER motif.

The protein belongs to the RxLR effector family.

Its subcellular location is the secreted. The protein resides in the host nucleus. It localises to the host cytoplasm. Its function is as follows. Secreted effector that completely suppresses the host cell death induced by cell death-inducing proteins. The chain is Secreted RxLR effector protein 147 from Plasmopara viticola (Downy mildew of grapevine).